The chain runs to 45 residues: Large ribosomal subunit protein bL34 (45 aa).

Residues 1 to 45 are disordered; that stretch reads MTKRTFGGTSRKRKRVSGFRVRMRSHTGRRVIKSRRKRGRDRIAV. Positions 10-45 are enriched in basic residues; it reads SRKRKRVSGFRVRMRSHTGRRVIKSRRKRGRDRIAV.

It belongs to the bacterial ribosomal protein bL34 family.

The polypeptide is Large ribosomal subunit protein bL34 (Prochlorococcus marinus (strain MIT 9515)).